The primary structure comprises 476 residues: Bifunctional protein GlmU (476 aa).

A pyrophosphorylase region spans residues Met-1–Arg-232. Residues Leu-9 to Gly-12, Lys-23, Gln-75, and Gly-80 to Thr-81 each bind UDP-N-acetyl-alpha-D-glucosamine. Residue Asp-105 coordinates Mg(2+). Gly-142, Glu-157, Asn-172, and Asn-230 together coordinate UDP-N-acetyl-alpha-D-glucosamine. Asn-230 is a binding site for Mg(2+). A linker region spans residues Val-233–Asn-253. The N-acetyltransferase stretch occupies residues Gly-254 to Gln-476. The UDP-N-acetyl-alpha-D-glucosamine site is built by Arg-353 and Lys-371. Residue His-383 is the Proton acceptor of the active site. Tyr-386 and Asn-397 together coordinate UDP-N-acetyl-alpha-D-glucosamine. Residues Asn-406–Tyr-407, Ser-425, Ala-443, and Arg-460 contribute to the acetyl-CoA site.

In the N-terminal section; belongs to the N-acetylglucosamine-1-phosphate uridyltransferase family. The protein in the C-terminal section; belongs to the transferase hexapeptide repeat family. As to quaternary structure, homotrimer. Requires Mg(2+) as cofactor.

It localises to the cytoplasm. It catalyses the reaction alpha-D-glucosamine 1-phosphate + acetyl-CoA = N-acetyl-alpha-D-glucosamine 1-phosphate + CoA + H(+). It carries out the reaction N-acetyl-alpha-D-glucosamine 1-phosphate + UTP + H(+) = UDP-N-acetyl-alpha-D-glucosamine + diphosphate. Its pathway is nucleotide-sugar biosynthesis; UDP-N-acetyl-alpha-D-glucosamine biosynthesis; N-acetyl-alpha-D-glucosamine 1-phosphate from alpha-D-glucosamine 6-phosphate (route II): step 2/2. The protein operates within nucleotide-sugar biosynthesis; UDP-N-acetyl-alpha-D-glucosamine biosynthesis; UDP-N-acetyl-alpha-D-glucosamine from N-acetyl-alpha-D-glucosamine 1-phosphate: step 1/1. It participates in bacterial outer membrane biogenesis; LPS lipid A biosynthesis. Catalyzes the last two sequential reactions in the de novo biosynthetic pathway for UDP-N-acetylglucosamine (UDP-GlcNAc). The C-terminal domain catalyzes the transfer of acetyl group from acetyl coenzyme A to glucosamine-1-phosphate (GlcN-1-P) to produce N-acetylglucosamine-1-phosphate (GlcNAc-1-P), which is converted into UDP-GlcNAc by the transfer of uridine 5-monophosphate (from uridine 5-triphosphate), a reaction catalyzed by the N-terminal domain. In Geobacter sulfurreducens (strain ATCC 51573 / DSM 12127 / PCA), this protein is Bifunctional protein GlmU.